Consider the following 171-residue polypeptide: Adenine phosphoribosyltransferase (171 aa).

It belongs to the purine/pyrimidine phosphoribosyltransferase family. In terms of assembly, homodimer.

It localises to the cytoplasm. The catalysed reaction is AMP + diphosphate = 5-phospho-alpha-D-ribose 1-diphosphate + adenine. It participates in purine metabolism; AMP biosynthesis via salvage pathway; AMP from adenine: step 1/1. Functionally, catalyzes a salvage reaction resulting in the formation of AMP, that is energically less costly than de novo synthesis. This chain is Adenine phosphoribosyltransferase, found in Halalkalibacterium halodurans (strain ATCC BAA-125 / DSM 18197 / FERM 7344 / JCM 9153 / C-125) (Bacillus halodurans).